A 300-amino-acid chain; its full sequence is Ribonuclease HIII (300 aa).

Positions 86-300 (RSRIGVDESG…FNEVLGSGNQ (215 aa)) constitute an RNase H type-2 domain. A divalent metal cation contacts are provided by aspartate 92, glutamate 93, and aspartate 196.

The protein belongs to the RNase HII family. RnhC subfamily. Mn(2+) is required as a cofactor. It depends on Mg(2+) as a cofactor.

The protein resides in the cytoplasm. The catalysed reaction is Endonucleolytic cleavage to 5'-phosphomonoester.. In terms of biological role, endonuclease that specifically degrades the RNA of RNA-DNA hybrids. The protein is Ribonuclease HIII of Chlamydia trachomatis serovar L2 (strain ATCC VR-902B / DSM 19102 / 434/Bu).